A 240-amino-acid chain; its full sequence is Mannose-binding protein C (240 aa).

An N-terminal signal peptide occupies residues 1-18 (MSLFPSLHLLLLIVMTAS). 2 Collagen-like domains span residues 39–61 (SPGI…KGEP) and 67–97 (GLQG…GDSG). The residue at position 46 (proline 46) is a Hydroxyproline. Positions 48–102 (KDGLDGAKGEKGEPGQGLIGLQGLPGMVGPQGSPGIPGLPGLKGQKGDSGIDPGN) are disordered. A compositionally biased stretch (basic and acidic residues) spans 49–60 (DGLDGAKGEKGE). Proline 72, proline 81, and proline 87 each carry hydroxyproline. The stretch at 104–122 (LANLRSELDNIKKWLIFAQ) forms a coiled coil. In terms of domain architecture, C-type lectin spans 126 to 237 (VGKKLYLTNG…CSSQLSAVCE (112 aa)). Disulfide bonds link cysteine 147/cysteine 236 and cysteine 214/cysteine 228.

Interacts with MASP1 and MASP2. Interacts with MEP1A and MEP1B and may inhibit their catalytic activity. Forms oligomeric complexes of 2 or 3 homotrimers. In terms of tissue distribution, expressed in liver. Weakly expressed in kidney and testis.

It localises to the secreted. Its function is as follows. Calcium-dependent lectin involved in innate immune defense. Binds mannose, fucose and N-acetylglucosamine on different microorganisms and activates the lectin complement pathway. Binds to late apoptotic cells, as well as to apoptotic blebs and to necrotic cells, but not to early apoptotic cells, facilitating their uptake by macrophages. According to some authors, it only binds mannose. The sequence is that of Mannose-binding protein C from Sus scrofa (Pig).